We begin with the raw amino-acid sequence, 521 residues long: Runt-related transcription factor 2 (521 aa).

Disordered regions lie at residues 18–59 and 222–340; these read FWDP…QQQQ and DGPR…RRIS. 2 stretches are compositionally biased toward low complexity: residues 21–33 and 47–59; these read PSTS…PSSS and AAQQ…QQQQ. The Runt domain maps to 101–229; that stretch reads TMVEIIADHP…TVDGPREPRR (129 aa). A Glycyl lysine isopeptide (Lys-Gly) (interchain with G-Cter in SUMO2) cross-link involves residue K238. Residues 242–258 form a required for interaction with FOXO1 region; the sequence is FSDRLSDLGRIPHPSMR. R267 is subject to Asymmetric dimethylarginine. The span at 267–326 shows a compositional bias: polar residues; sequence RPSLNSAPSPFNPQGQSQITDPRQAQSSPPWSYDQSYPSYLSQMTSPSIHSTTPLSSTRG. Residues 336-439 are interaction with KAT6A; that stretch reads PRRISDDDTA…SQSQSGPFQT (104 aa). Position 340 is a phosphoserine (S340). An interaction with KAT6B region spans residues 374–468; sequence RQFPSISSLT…VPGGDRSPSR (95 aa). A Phosphoserine; by CDK1 modification is found at S451. The disordered stretch occupies residues 460-521; sequence PGGDRSPSRM…RMDESVWRPY (62 aa). 2 stretches are compositionally biased toward polar residues: residues 473-492 and 499-511; these read CTTT…NQND and SHSS…NSSG. Basic and acidic residues predominate over residues 512–521; the sequence is RMDESVWRPY.

In terms of assembly, heterodimer of an alpha and a beta subunit. The alpha subunit binds DNA as a monomer and through the Runt domain. DNA-binding is increased by heterodimerization. Interacts with XRCC6 (Ku70) and XRCC5 (Ku80). Interacts with HIVEP3. Interacts with IFI204. Interaction with SATB2; the interaction results in enhanced DNA binding and transactivation by these transcription factors. Binds to HIPK3. Interacts with FOXO1 (via a C-terminal region); the interaction inhibits RUNX2 transcriptional activity towards BGLAP. This interaction is prevented on insulin or IGF1 stimulation as FOXO1 is exported from the nucleus. Interacts with CCNB1, KAT6A and KAT6B. Interacts with FOXP3. Interacts with TMEM119. Interacts with OLFM2. Interacts with IPO7; the interaction inhibits RUNX2 nuclear translocation in osteoblasts. Interacts with DDX5. Phosphorylated; probably by MAP kinases (MAPK). Phosphorylation by HIPK3 is required for the SPEN/MINT and FGF2 transactivation during osteoblastic differentiation. Phosphorylation at Ser-451 by CDK1 promotes endothelial cell proliferation required for tumor angiogenesis probably by facilitating cell cycle progression. Isoform 3 is phosphorylated on Ser-340. Specifically expressed in osteoblasts.

Its subcellular location is the nucleus. The protein localises to the cytoplasm. Its function is as follows. Transcription factor involved in osteoblastic differentiation and skeletal morphogenesis. Essential for the maturation of osteoblasts and both intramembranous and endochondral ossification. CBF binds to the core site, 5'-PYGPYGGT-3', of a number of enhancers and promoters, including murine leukemia virus, polyomavirus enhancer, T-cell receptor enhancers, osteocalcin, osteopontin, bone sialoprotein, alpha 1(I) collagen, LCK, IL-3 and GM-CSF promoters. In osteoblasts, supports transcription activation: synergizes with SPEN/MINT to enhance FGFR2-mediated activation of the osteocalcin FGF-responsive element (OCFRE). Inhibits KAT6B-dependent transcriptional activation. This Homo sapiens (Human) protein is Runt-related transcription factor 2 (RUNX2).